Here is a 1266-residue protein sequence, read N- to C-terminus: 5-oxoprolinase 1 (1266 aa).

It belongs to the oxoprolinase family. In terms of tissue distribution, expressed in roots, stems, leaves, flowers and siliques.

The protein localises to the cytoplasm. The catalysed reaction is 5-oxo-L-proline + ATP + 2 H2O = L-glutamate + ADP + phosphate + H(+). In terms of biological role, catalyzes the cleavage of 5-oxo-L-proline to form L-glutamate coupled to the hydrolysis of ATP to ADP and inorganic phosphate. Acts in the glutathione degradation pathway. The protein is 5-oxoprolinase 1 of Arabidopsis thaliana (Mouse-ear cress).